A 112-amino-acid polypeptide reads, in one-letter code: MELNAFTILQIAVFIAVGYHANTHSPVAGSEVQKLTSDPNDDIDVSYCGMNCTVVNGKSDECSENCKCLHEGDDPKGICVAITYFGDWGDPNDDPKINEATPQTQIFEKKRK.

The signal sequence occupies residues 1–23; that stretch reads MELNAFTILQIAVFIAVGYHANT. 3 disulfide bridges follow: cysteine 48–cysteine 66, cysteine 52–cysteine 68, and cysteine 62–cysteine 79. Asparagine 51 is a glycosylation site (N-linked (GlcNAc...) asparagine). The disordered stretch occupies residues 89-112; the sequence is GDPNDDPKINEATPQTQIFEKKRK.

It is found in the secreted. In terms of biological role, salivary chemokine-binding protein which binds to host chemokine CXCL8. The chain is Evasin P1095 from Ixodes ricinus (Common tick).